Reading from the N-terminus, the 293-residue chain is Inhibitory synaptic factor 1 (293 aa).

Residues 1–26 (MNIRGAPDLGQPSDDPSSGGERERIR) are disordered. A coiled-coil region spans residues 30–63 (KMVIGQLEGILRELKEVAKELREVVSQIDKLTSD). Disordered regions lie at residues 120 to 186 (TPSD…RERV) and 200 to 293 (DDEE…RGKN). Residues 171–180 (VKSQLPQRTP) are compositionally biased toward polar residues. The span at 200–215 (DDEEGDGEQEVEEEEV) shows a compositional bias: acidic residues. Composition is skewed to polar residues over residues 243–256 (SPLTSRHSGSTLAP) and 264–286 (RNSSTQTVSDKSTQTVLPYTATR).

Belongs to the INSYN1 family. As to quaternary structure, interacts with GPHN.

It localises to the postsynaptic density. Component of the protein machinery at the inhibitory synapses, probably acting as a scaffold. Inhibitory synapses dampen neuronal activity through postsynaptic hyperpolarization. This synaptic inhibition is fundamental for the functioning of the central nervous system, shaping and orchestrating the flow of information through neuronal networks to generate a precise neural code. This is Inhibitory synaptic factor 1 from Homo sapiens (Human).